A 358-amino-acid chain; its full sequence is Chorismate synthase (358 aa).

NADP(+) is bound at residue Arg-46. FMN is bound by residues 123–125, 235–236, Gly-275, 290–294, and Arg-316; these read RSS, NA, and KPTPS.

The protein belongs to the chorismate synthase family. As to quaternary structure, homotetramer. Requires FMNH2 as cofactor.

It carries out the reaction 5-O-(1-carboxyvinyl)-3-phosphoshikimate = chorismate + phosphate. Its pathway is metabolic intermediate biosynthesis; chorismate biosynthesis; chorismate from D-erythrose 4-phosphate and phosphoenolpyruvate: step 7/7. Functionally, catalyzes the anti-1,4-elimination of the C-3 phosphate and the C-6 proR hydrogen from 5-enolpyruvylshikimate-3-phosphate (EPSP) to yield chorismate, which is the branch point compound that serves as the starting substrate for the three terminal pathways of aromatic amino acid biosynthesis. This reaction introduces a second double bond into the aromatic ring system. This chain is Chorismate synthase, found in Sulfurimonas denitrificans (strain ATCC 33889 / DSM 1251) (Thiomicrospira denitrificans (strain ATCC 33889 / DSM 1251)).